Consider the following 630-residue polypeptide: Chaperone protein HtpG (630 aa).

The segment at Met1–Arg339 is a; substrate-binding. The interval Glu340–Arg556 is b. Positions Met557–Ile630 are c.

Belongs to the heat shock protein 90 family. Homodimer.

It is found in the cytoplasm. Functionally, molecular chaperone. Has ATPase activity. This is Chaperone protein HtpG from Hydrogenovibrio crunogenus (strain DSM 25203 / XCL-2) (Thiomicrospira crunogena).